The sequence spans 426 residues: 10-deoxymethynolide desosaminyltransferase (426 aa).

The protein belongs to the glycosyltransferase 28 family. Forms a complex with DesVIII.

The catalysed reaction is 10-deoxymethynolide + dTDP-alpha-D-desosamine = 10-deoxymethymycin + dTDP + H(+). It functions in the pathway antibiotic biosynthesis. Involved in the biosynthesis of the macrolide antibiotics methymycin, neomethymycin, narbomycin, and pikromycin. Catalyzes the attachment of dTDP-D-desosamine onto 12- and 14-membered macrolactone rings 10-deoxymethynolide and narbonolide to produce 10-deoxymethymycin (YC-17) and narbomycin. DesVII is unique among glycosyltransferases in that it requires an additional protein component, DesVIII, for its activity. DesVII can recognize and process not only cyclic substrates of different ring size, but also a variety of linear substrates albeit with reduced, but measurable activities. Both L-sugars and D-sugars are recognized as substrates and variant substitutions at C-3 and C-4 are tolerated, but deoxygenation at C-6 is required. This chain is 10-deoxymethynolide desosaminyltransferase, found in Streptomyces venezuelae.